An 840-amino-acid chain; its full sequence is DNA gyrase subunit A (840 aa).

In terms of domain architecture, Topo IIA-type catalytic spans 51–516 (LPDVRDGFKP…VSSHIDDEDL (466 aa)). Tyr-139 functions as the O-(5'-phospho-DNA)-tyrosine intermediate in the catalytic mechanism. Positions 543 to 549 (QRRGGVG) match the GyrA-box motif.

The protein belongs to the type II topoisomerase GyrA/ParC subunit family. In terms of assembly, heterotetramer, composed of two GyrA and two GyrB chains. In the heterotetramer, GyrA contains the active site tyrosine that forms a transient covalent intermediate with DNA, while GyrB binds cofactors and catalyzes ATP hydrolysis.

Its subcellular location is the cytoplasm. The enzyme catalyses ATP-dependent breakage, passage and rejoining of double-stranded DNA.. In terms of biological role, a type II topoisomerase that negatively supercoils closed circular double-stranded (ds) DNA in an ATP-dependent manner to modulate DNA topology and maintain chromosomes in an underwound state. Negative supercoiling favors strand separation, and DNA replication, transcription, recombination and repair, all of which involve strand separation. Also able to catalyze the interconversion of other topological isomers of dsDNA rings, including catenanes and knotted rings. Type II topoisomerases break and join 2 DNA strands simultaneously in an ATP-dependent manner. This Ureaplasma parvum serovar 3 (strain ATCC 700970) protein is DNA gyrase subunit A.